A 262-amino-acid chain; its full sequence is MTRIHPTAIVEPGAQIDESVEIGPYAIIGPHVTIGARTTIGSHSVIEGHTTIGEDNRIGHYASVGGRPQDMKYKDEPTKLVIGNRNTIREFTTIHTGTVQDAGVTTLGDDNWIMAYVHIGHDCRVGNHVILSSNAQMAGHVEIGDWAIIGGMSGVHQFVRIGAHAMLGGASALVQDVPPFVIAAGNKAEPHGINVEGLRRRGFSPDAISALRSAYRLLYKNGLSLEEAKTQLRELAQAGGDGDAPVNALVAFIDASQRGIIR.

The protein belongs to the transferase hexapeptide repeat family. LpxA subfamily. In terms of assembly, homotrimer.

The protein resides in the cytoplasm. The enzyme catalyses a (3R)-hydroxyacyl-[ACP] + UDP-N-acetyl-alpha-D-glucosamine = a UDP-3-O-[(3R)-3-hydroxyacyl]-N-acetyl-alpha-D-glucosamine + holo-[ACP]. The protein operates within glycolipid biosynthesis; lipid IV(A) biosynthesis; lipid IV(A) from (3R)-3-hydroxytetradecanoyl-[acyl-carrier-protein] and UDP-N-acetyl-alpha-D-glucosamine: step 1/6. Functionally, involved in the biosynthesis of lipid A, a phosphorylated glycolipid that anchors the lipopolysaccharide to the outer membrane of the cell. The protein is Acyl-[acyl-carrier-protein]--UDP-N-acetylglucosamine O-acyltransferase of Burkholderia multivorans (strain ATCC 17616 / 249).